The primary structure comprises 116 residues: Aspartate 1-decarboxylase (116 aa).

Residue S25 is the Schiff-base intermediate with substrate; via pyruvic acid of the active site. The residue at position 25 (S25) is a Pyruvic acid (Ser). T57 provides a ligand contact to substrate. Y58 serves as the catalytic Proton donor. 73–75 is a binding site for substrate; the sequence is GAA.

This sequence belongs to the PanD family. In terms of assembly, heterooctamer of four alpha and four beta subunits. It depends on pyruvate as a cofactor. In terms of processing, is synthesized initially as an inactive proenzyme, which is activated by self-cleavage at a specific serine bond to produce a beta-subunit with a hydroxyl group at its C-terminus and an alpha-subunit with a pyruvoyl group at its N-terminus.

The protein localises to the cytoplasm. It catalyses the reaction L-aspartate + H(+) = beta-alanine + CO2. It participates in cofactor biosynthesis; (R)-pantothenate biosynthesis; beta-alanine from L-aspartate: step 1/1. In terms of biological role, catalyzes the pyruvoyl-dependent decarboxylation of aspartate to produce beta-alanine. The chain is Aspartate 1-decarboxylase from Phocaeicola vulgatus (strain ATCC 8482 / DSM 1447 / JCM 5826 / CCUG 4940 / NBRC 14291 / NCTC 11154) (Bacteroides vulgatus).